Consider the following 169-residue polypeptide: Cell division inhibitor SulA (169 aa).

Residues 106–112 form a ftsZ binding region; it reads ALRTGNY. The interval 162–169 is lon protease binding; it reads KIHSNLYH.

Belongs to the SulA family. As to quaternary structure, interacts with FtsZ. Post-translationally, is rapidly cleaved and degraded by the Lon protease once DNA damage is repaired.

Its function is as follows. Component of the SOS system and an inhibitor of cell division. Accumulation of SulA causes rapid cessation of cell division and the appearance of long, non-septate filaments. In the presence of GTP, binds a polymerization-competent form of FtsZ in a 1:1 ratio, thus inhibiting FtsZ polymerization and therefore preventing it from participating in the assembly of the Z ring. This mechanism prevents the premature segregation of damaged DNA to daughter cells during cell division. The protein is Cell division inhibitor SulA of Escherichia coli O45:K1 (strain S88 / ExPEC).